The primary structure comprises 231 residues: Transmembrane gamma-carboxyglutamic acid protein 3 (231 aa).

A propeptide spanning residues 1-19 is cleaved from the precursor; the sequence is MAVFLEAKDAHSVLKRFPR. A Gla domain is found at 20 to 65; sequence ANEFLEELRQGTIERECMEEICSYEEVKEVFENKEKTMEFWKGYPN. The Extracellular portion of the chain corresponds to 20-78; the sequence is ANEFLEELRQGTIERECMEEICSYEEVKEVFENKEKTMEFWKGYPNAVYSVRDPSQSSD. 4-carboxyglutamate occurs at positions 22, 25, 26, 33, 35, 38, 39, 44, 45, 48, 51, 54, and 58. Cys-36 and Cys-41 form a disulfide bridge. The chain crosses the membrane as a helical span at residues 79–101; that stretch reads AMYVVVPLLGVALLIVIALFIIW. At 102–231 the chain is on the cytoplasmic side; it reads RCQLQKATRH…IVAANPGADK (130 aa). Disordered stretches follow at residues 140–165 and 182–231; these read HSQG…SRGG and LSRL…GADK. A compositionally biased stretch (low complexity) spans 202–213; the sequence is ESSSEEASVSYS.

Gla residues are produced after subsequent post-translational modifications of glutamate by a vitamin K-dependent gamma-carboxylase. Expressed in brain, lung, kidney and heart.

It is found in the membrane. In Homo sapiens (Human), this protein is Transmembrane gamma-carboxyglutamic acid protein 3 (PRRG3).